We begin with the raw amino-acid sequence, 97 residues long: Large ribosomal subunit protein uL23 (97 aa).

The protein belongs to the universal ribosomal protein uL23 family. In terms of assembly, part of the 50S ribosomal subunit. Contacts protein L29, and trigger factor when it is bound to the ribosome.

In terms of biological role, one of the early assembly proteins it binds 23S rRNA. One of the proteins that surrounds the polypeptide exit tunnel on the outside of the ribosome. Forms the main docking site for trigger factor binding to the ribosome. The sequence is that of Large ribosomal subunit protein uL23 from Thermoanaerobacter pseudethanolicus (strain ATCC 33223 / 39E) (Clostridium thermohydrosulfuricum).